The sequence spans 62 residues: Flavodoxin (62 aa).

The 59-residue stretch at 4-62 (IGIFFGTDTGKTRKIAKMIHKQLGELADAPVNINRTTLDDFMAYPVLLLGTPTLGDGQL) folds into the Flavodoxin-like domain.

It belongs to the flavodoxin family. The cofactor is FMN.

In terms of biological role, low-potential electron donor to a number of redox enzymes. NifF is the electron donor to nitrogenase. The sequence is that of Flavodoxin (nifF) from Klebsiella oxytoca.